Here is a 455-residue protein sequence, read N- to C-terminus: Polyadenylation factor subunit 2 (455 aa).

7 WD repeats span residues 80 to 119 (KVKH…FETI), 122 to 162 (AHDT…KELD), 164 to 203 (IHTE…QERV), 206 to 245 (GHHW…CVST), 248 to 288 (KFKH…NELM), 291 to 331 (RDEV…EKPI), and 337 to 376 (AHEK…DPNA). Disordered stretches follow at residues 406–425 (EYGA…TQYN) and 430–455 (RVPE…GLSI). Basic and acidic residues predominate over residues 432-446 (PEIKEPTPTTDKEQR).

The protein resides in the nucleus. Functionally, required for 3'-end cleavage and polyadenylation of pre-mRNAs. Also involved in chromosome segregation where it has a role in chromosome attachment to the mitotic spindle. This chain is Polyadenylation factor subunit 2 (PFS2), found in Candida glabrata (strain ATCC 2001 / BCRC 20586 / JCM 3761 / NBRC 0622 / NRRL Y-65 / CBS 138) (Yeast).